The primary structure comprises 196 residues: UPF0316 protein LBL_2483 (196 aa).

3 consecutive transmembrane segments (helical) span residues 12-32 (YCVLPCFIFLARVTDVSIGTI), 44-64 (IAASLGFLEVLLWVIVITQVI), and 70-90 (ALCYLAYAGGFAAGTFIGMIL).

Belongs to the UPF0316 family.

It is found in the cell membrane. This chain is UPF0316 protein LBL_2483, found in Leptospira borgpetersenii serovar Hardjo-bovis (strain L550).